A 132-amino-acid chain; its full sequence is NADH-quinone oxidoreductase subunit I 1 (132 aa).

4Fe-4S ferredoxin-type domains are found at residues 42-71 (LKVSHDKAKCVACYLCPTVCPAKCITVEAG) and 81-110 (ERYEIDMLRCIFCGYCVEACPVDALKMTGQ). 8 residues coordinate [4Fe-4S] cluster: cysteine 51, cysteine 54, cysteine 57, cysteine 61, cysteine 90, cysteine 93, cysteine 96, and cysteine 100.

This sequence belongs to the complex I 23 kDa subunit family. In terms of assembly, NDH-1 is composed of 14 different subunits. Subunits NuoA, H, J, K, L, M, N constitute the membrane sector of the complex. [4Fe-4S] cluster is required as a cofactor.

It is found in the cell inner membrane. The enzyme catalyses a quinone + NADH + 5 H(+)(in) = a quinol + NAD(+) + 4 H(+)(out). Functionally, NDH-1 shuttles electrons from NADH, via FMN and iron-sulfur (Fe-S) centers, to quinones in the respiratory chain. The immediate electron acceptor for the enzyme in this species is believed to be ubiquinone. Couples the redox reaction to proton translocation (for every two electrons transferred, four hydrogen ions are translocated across the cytoplasmic membrane), and thus conserves the redox energy in a proton gradient. This is NADH-quinone oxidoreductase subunit I 1 from Geobacter sulfurreducens (strain ATCC 51573 / DSM 12127 / PCA).